Consider the following 133-residue polypeptide: UPF0102 protein Anae109_1947 (133 aa).

It belongs to the UPF0102 family.

The polypeptide is UPF0102 protein Anae109_1947 (Anaeromyxobacter sp. (strain Fw109-5)).